The primary structure comprises 91 residues: Acylphosphatase (91 aa).

The Acylphosphatase-like domain maps to 5–91; sequence WKKWNVRGVV…QEYKDFHVEF (87 aa). Catalysis depends on residues Arg20 and Asn38.

Belongs to the acylphosphatase family.

The catalysed reaction is an acyl phosphate + H2O = a carboxylate + phosphate + H(+). This is Acylphosphatase (acyP) from Fervidobacterium nodosum (strain ATCC 35602 / DSM 5306 / Rt17-B1).